Here is a 98-residue protein sequence, read N- to C-terminus: Integration host factor subunit alpha (98 aa).

Belongs to the bacterial histone-like protein family. As to quaternary structure, heterodimer of an alpha and a beta chain.

This protein is one of the two subunits of integration host factor, a specific DNA-binding protein that functions in genetic recombination as well as in transcriptional and translational control. This Glaesserella parasuis serovar 5 (strain SH0165) (Haemophilus parasuis) protein is Integration host factor subunit alpha.